A 737-amino-acid polypeptide reads, in one-letter code: Catalase-peroxidase (737 aa).

Positions 1 to 29 (MTDSPDATTGGCPVAHGDRLPHPTQGGAN) are disordered. The tryptophyl-tyrosyl-methioninium (Trp-Tyr) (with M-253) cross-link spans 101-227 (WHSAGTYRVS…LGATHMGLIY (127 aa)). Histidine 102 serves as the catalytic Proton acceptor. Residues 227–253 (YVNPEGPEGKPDPVAAARDIRETFGRM) constitute a cross-link (tryptophyl-tyrosyl-methioninium (Tyr-Met) (with W-101)). Histidine 268 contributes to the heme b binding site.

The protein belongs to the peroxidase family. Peroxidase/catalase subfamily. As to quaternary structure, homodimer or homotetramer. Heme b is required as a cofactor. Post-translationally, formation of the three residue Trp-Tyr-Met cross-link is important for the catalase, but not the peroxidase activity of the enzyme.

The enzyme catalyses H2O2 + AH2 = A + 2 H2O. The catalysed reaction is 2 H2O2 = O2 + 2 H2O. In terms of biological role, bifunctional enzyme with both catalase and broad-spectrum peroxidase activity. The polypeptide is Catalase-peroxidase (Saccharopolyspora erythraea (strain ATCC 11635 / DSM 40517 / JCM 4748 / NBRC 13426 / NCIMB 8594 / NRRL 2338)).